Reading from the N-terminus, the 199-residue chain is Phosphatidylethanolamine N-methyltransferase (199 aa).

Over 1–12 the chain is Lumenal; that stretch reads MTRLLGYVDPLD. The segment at residues 13–33 is an intramembrane region (helical); it reads PSFVAAVITITFNPLYWNVVA. Residues 34–45 are Lumenal-facing; the sequence is RWEHKTRKLSRA. A helical transmembrane segment spans residues 46-66; sequence FGSPYLACYSLSVTILLLNFL. The Cytoplasmic segment spans residues 67 to 93; the sequence is RSHCFTQAMLSQPRMESLDTPAAYSLG. Residues 94-114 form a helical membrane-spanning segment; it reads LALLGLGVVLVLSSFFALGFA. 98–100 contributes to the S-adenosyl-L-methionine binding site; it reads GLG. Residues 115-157 are Lumenal-facing; it reads GTFLGDYFGILKEARVTVFPFNILDNPMYWGSTANYLGWAIMH. Residues 158–178 form a helical membrane-spanning segment; sequence ASPTGLLLTVLVALTYIVALL. Residues 179–199 are Cytoplasmic-facing; that stretch reads YEEPFTAEIYRQKASGSHKRS. 180–181 lines the S-adenosyl-L-methionine pocket; the sequence is EE.

Belongs to the class VI-like SAM-binding methyltransferase superfamily. PEMT/PEM2 methyltransferase family. In terms of processing, isoform 2 is N-glycosylated with high-mannose oligosaccharides. As to expression, primarily expressed in liver (at protein level).

The protein resides in the endoplasmic reticulum. The protein localises to the endoplasmic reticulum membrane. It localises to the mitochondrion membrane. It catalyses the reaction a 1,2-diacyl-sn-glycero-3-phospho-N-methylethanolamine + S-adenosyl-L-methionine = a 1,2-diacyl-sn-glycero-3-phospho-N,N-dimethylethanolamine + S-adenosyl-L-homocysteine + H(+). The catalysed reaction is a 1,2-diacyl-sn-glycero-3-phospho-N,N-dimethylethanolamine + S-adenosyl-L-methionine = a 1,2-diacyl-sn-glycero-3-phosphocholine + S-adenosyl-L-homocysteine + H(+). It carries out the reaction a 1,2-diacyl-sn-glycero-3-phosphoethanolamine + S-adenosyl-L-methionine = a 1,2-diacyl-sn-glycero-3-phospho-N-methylethanolamine + S-adenosyl-L-homocysteine + H(+). The enzyme catalyses 1,2-di-(9Z-octadecenoyl)-sn-glycero-3-phosphoethanolamine + S-adenosyl-L-methionine = 1,2-di-(9Z-octadecenoyl)-sn-glycero-3-phospho-N-methylethanolamine + S-adenosyl-L-homocysteine + H(+). It catalyses the reaction 1,2-di-(9Z-octadecenoyl)-sn-glycero-3-phospho-N-methylethanolamine + S-adenosyl-L-methionine = 1,2-di-(9Z-octadecenoyl)-sn-glycero-3-phospho-N,N-dimethylethanolamine + S-adenosyl-L-homocysteine + H(+). The catalysed reaction is 1,2-di-(9Z-octadecenoyl)-sn-glycero-3-phospho-N,N-dimethylethanolamine + S-adenosyl-L-methionine = 1,2-di-(9Z-octadecenoyl)-sn-glycero-3-phosphocholine + S-adenosyl-L-homocysteine + H(+). It carries out the reaction 1,2-di-(9Z,12Z-octadecadienoyl)-sn-glycero-3-phosphoethanolamine + S-adenosyl-L-methionine = 1,2-di-(9Z,12Z-octadecadienoyl)-sn-glycero-3-phospho-N-methylethanolamine + S-adenosyl-L-homocysteine + H(+). The enzyme catalyses 1,2-di-(9Z,12Z-octadecadienoyl)-sn-glycero-3-phospho-N-methylethanolamine + S-adenosyl-L-methionine = 1,2-di-(9Z,12Z-octadecadienoyl)-sn-glycero-3-phospho-N,N-dimethylethanolamine + S-adenosyl-L-homocysteine + H(+). It catalyses the reaction 1,2-di-(9Z,12Z-octadecadienoyl)-sn-glycero-3-phospho-N,N-dimethylethanolamine + S-adenosyl-L-methionine = 1,2-di-(9Z,12Z-octadecadienoyl)-sn-glycero-3-phosphocholine + S-adenosyl-L-homocysteine + H(+). The catalysed reaction is 1,2-di-(9Z,12Z,15Z-octadecatrienoyl)-sn-glycero-3-phosphoethanolamine + S-adenosyl-L-methionine = 1,2-di-(9Z,12Z,15Z-octadecatrienoyl)-sn-glycero-3-phospho-N-methylethanolamine + S-adenosyl-L-homocysteine + H(+). It carries out the reaction 1,2-di-(9Z,12Z,15Z-octadecatrienoyl)-sn-glycero-3-phospho-N-methylethanolamine + S-adenosyl-L-methionine = 1,2-di-(9Z,12Z,15Z-octadecatrienoyl)-sn-glycero-3-phospho-N,N-dimethylethanolamine + S-adenosyl-L-homocysteine + H(+). The enzyme catalyses 1,2-di-(9Z,12Z,15Z-octadecatrienoyl)-sn-glycero-3-phospho-N,N-dimethylethanolamine + S-adenosyl-L-methionine = 1,2-di-(9Z,12Z,15Z-octadecatrienoyl)-sn-glycero-3-phosphocholine + S-adenosyl-L-homocysteine + H(+). It catalyses the reaction 1-hexadecanoyl-2-(4Z,7Z,10Z,13Z,16Z,19Z-docosahexaenoyl)-sn-glycero-3-phosphoethanolamine + S-adenosyl-L-methionine = 1-hexadecanoyl-2-(4Z,7Z,10Z,13Z,16Z,19Z-docosahexaenoyl)-sn-glycero-3-phospho-N-methylethanolamine + S-adenosyl-L-homocysteine + H(+). The catalysed reaction is 1-hexadecanoyl-2-(4Z,7Z,10Z,13Z,16Z,19Z-docosahexaenoyl)-sn-glycero-3-phospho-N-methylethanolamine + S-adenosyl-L-methionine = 1-hexadecanoyl-2-(4Z,7Z,10Z,13Z,16Z,19Z-docosahexaenoyl)-sn-glycero-3-phospho-N,N-dimethylethanolamine + S-adenosyl-L-homocysteine + H(+). It carries out the reaction 1-hexadecanoyl-2-(4Z,7Z,10Z,13Z,16Z,19Z-docosahexaenoyl)-sn-glycero-3-phospho-N,N-dimethylethanolamine + S-adenosyl-L-methionine = 1-hexadecanoyl-2-(4Z,7Z,10Z,13Z,16Z,19Z-docosahexaenoyl)-sn-glycero-3-phosphocholine + S-adenosyl-L-homocysteine + H(+). It participates in phospholipid metabolism; phosphatidylcholine biosynthesis. With respect to regulation, the first methylation is rate-limiting. Functionally, catalyzes the three sequential steps of the methylation pathway for the biosynthesis of phosphatidylcholine, a critical and essential component for membrane structure. Uses S-adenosylmethionine (S-adenosyl-L-methionine, SAM or AdoMet) as the methyl group donor for the methylation of phosphatidylethanolamine (1,2-diacyl-sn-glycero-3-phosphoethanolamine, PE) to phosphatidylmonomethylethanolamine (1,2-diacyl-sn-glycero-3-phospho-N-methylethanolamine, PMME), PMME to phosphatidyldimethylethanolamine (1,2-diacyl-sn-glycero-3-phospho-N,N-dimethylethanolamine, PDME), and PDME to phosphatidylcholine (1,2-diacyl-sn-glycero-3-phosphocholine, PC), producing S-adenosyl-L-homocysteine in each step. Responsible for approximately 30% of hepatic PC with the CDP-choline pathway accounting for the other 70%. Catalyzes the three sequential steps of the methylation of 1,2-diacyl-sn-glycero-3-phospho-N-methylethanolamine (PMME) to 1,2-diacyl-sn-glycero-3-phospho-N,N-dimethylethanolamine (PDME) more efficiently than isoform 2. Induces increase in PC species with longer polyunsaturated chains than isoform 2. Its function is as follows. Produces a higher increase in the level of PC species containing long chains with three double bonds than isoform 1. The polypeptide is Phosphatidylethanolamine N-methyltransferase (Homo sapiens (Human)).